A 278-amino-acid chain; its full sequence is Dermonecrotic toxin LbSicTox-betaIA1a (278 aa).

Histidine 12 is an active-site residue. The Mg(2+) site is built by glutamate 32 and aspartate 34. Histidine 48 (nucleophile) is an active-site residue. 2 disulfide bridges follow: cysteine 52–cysteine 58 and cysteine 54–cysteine 197. A Mg(2+)-binding site is contributed by aspartate 92. N-linked (GlcNAc...) asparagine glycosylation occurs at asparagine 258.

Belongs to the arthropod phospholipase D family. Class II subfamily. Class IIb sub-subfamily. As to expression, expressed by the venom gland.

The protein resides in the secreted. It catalyses the reaction an N-(acyl)-sphingosylphosphoethanolamine = an N-(acyl)-sphingosyl-1,3-cyclic phosphate + ethanolamine. It carries out the reaction a 1-acyl-sn-glycero-3-phosphocholine = a 1-acyl-sn-glycero-2,3-cyclic phosphate + choline. The enzyme catalyses a 1-acyl-sn-glycero-3-phosphoethanolamine = a 1-acyl-sn-glycero-2,3-cyclic phosphate + ethanolamine. Its function is as follows. This toxin does not show activity on sphingomyelin (SM) and does not show dermonecrotic activities. This toxin is a member of dermonecrotic toxins that cleave the phosphodiester linkage between the phosphate and headgroup of certain phospholipids (sphingolipid and lysolipid substrates), forming an alcohol (often choline) and a cyclic phosphate. It may act on ceramide phosphoethanolamine (CPE), lysophosphatidylcholine (LPC) and lysophosphatidylethanolamine (LPE), but not on lysophosphatidylserine (LPS), and lysophosphatidylglycerol (LPG). It may act by transphosphatidylation, releasing exclusively cyclic phosphate products as second products. The polypeptide is Dermonecrotic toxin LbSicTox-betaIA1a (Loxosceles boneti (North American fiddleback spider)).